A 92-amino-acid polypeptide reads, in one-letter code: PqqA binding protein (92 aa).

The protein belongs to the PqqD family. In terms of assembly, monomer. Interacts with PqqE.

It functions in the pathway cofactor biosynthesis; pyrroloquinoline quinone biosynthesis. Its function is as follows. Functions as a PqqA binding protein and presents PqqA to PqqE, in the pyrroloquinoline quinone (PQQ) biosynthetic pathway. This chain is PqqA binding protein, found in Xanthomonas axonopodis pv. citri (strain 306).